We begin with the raw amino-acid sequence, 257 residues long: MSINDKPIGFFDSGVGGISVLKEAFKLLPKEDFLYYGDSKNAPYGTKKVEEVKALTFNATDFLMNKGIKALVVACNTATSVTINDLRENYDIPIIGIEPALKPAVELNKGGKIIIMATPMTLAEKKFANLMDLYKETEDIEPLPCPGLPELIEQGIVSGDVIYNYLKDKFSKYDNEKISSIVLGCTHYPFIEETLKEVTHNKACIIDGSFGTSRELKRQLKNSNMLREENRVGKVTIFNSREDKDIIDLSYKLFNMK.

Residues 12–13 (DS) and 44–45 (YG) each bind substrate. Residue cysteine 75 is the Proton donor/acceptor of the active site. Residue 76–77 (NT) participates in substrate binding. Cysteine 185 acts as the Proton donor/acceptor in catalysis. 186–187 (TH) lines the substrate pocket.

It belongs to the aspartate/glutamate racemases family.

It carries out the reaction L-glutamate = D-glutamate. Its pathway is cell wall biogenesis; peptidoglycan biosynthesis. Provides the (R)-glutamate required for cell wall biosynthesis. In Clostridium botulinum (strain Langeland / NCTC 10281 / Type F), this protein is Glutamate racemase.